The primary structure comprises 171 residues: 16S rRNA aminocarboxypropyltransferase (171 aa).

Positions 17, 67, 90, and 109 each coordinate S-adenosyl-L-methionine.

It belongs to the TDD superfamily. TSR3 family.

It localises to the cytoplasm. The enzyme catalyses an N(1)-methylpseudouridine in rRNA + S-adenosyl-L-methionine = N(1)-methyl-N(3)-[(3S)-3-amino-3-carboxypropyl]pseudouridine in rRNA + S-methyl-5'-thioadenosine + H(+). Functionally, aminocarboxypropyltransferase that catalyzes the aminocarboxypropyl transfer on pseudouridine corresponding to position 914 in M.jannaschii 16S rRNA. It constitutes the last step in biosynthesis of the hypermodified N1-methyl-N3-(3-amino-3-carboxypropyl) pseudouridine (m1acp3-Psi). This Methanobrevibacter smithii (strain ATCC 35061 / DSM 861 / OCM 144 / PS) protein is 16S rRNA aminocarboxypropyltransferase.